Consider the following 962-residue polypeptide: Glycine dehydrogenase (decarboxylating) (962 aa).

Lys-709 carries the post-translational modification N6-(pyridoxal phosphate)lysine.

The protein belongs to the GcvP family. The glycine cleavage system is composed of four proteins: P, T, L and H. The cofactor is pyridoxal 5'-phosphate.

The enzyme catalyses N(6)-[(R)-lipoyl]-L-lysyl-[glycine-cleavage complex H protein] + glycine + H(+) = N(6)-[(R)-S(8)-aminomethyldihydrolipoyl]-L-lysyl-[glycine-cleavage complex H protein] + CO2. Functionally, the glycine cleavage system catalyzes the degradation of glycine. The P protein binds the alpha-amino group of glycine through its pyridoxal phosphate cofactor; CO(2) is released and the remaining methylamine moiety is then transferred to the lipoamide cofactor of the H protein. The sequence is that of Glycine dehydrogenase (decarboxylating) from Shewanella sediminis (strain HAW-EB3).